A 252-amino-acid polypeptide reads, in one-letter code: 3-dehydroquinate dehydratase (252 aa).

Residues 46–48 (EWR) and Arg-82 contribute to the 3-dehydroquinate site. The active-site Proton donor/acceptor is the His-143. Catalysis depends on Lys-170, which acts as the Schiff-base intermediate with substrate. Positions 212, 231, and 235 each coordinate 3-dehydroquinate.

Belongs to the type-I 3-dehydroquinase family. As to quaternary structure, homodimer.

The enzyme catalyses 3-dehydroquinate = 3-dehydroshikimate + H2O. The protein operates within metabolic intermediate biosynthesis; chorismate biosynthesis; chorismate from D-erythrose 4-phosphate and phosphoenolpyruvate: step 3/7. Functionally, involved in the third step of the chorismate pathway, which leads to the biosynthesis of aromatic amino acids. Catalyzes the cis-dehydration of 3-dehydroquinate (DHQ) and introduces the first double bond of the aromatic ring to yield 3-dehydroshikimate. The protein is 3-dehydroquinate dehydratase of Listeria monocytogenes serotype 4b (strain CLIP80459).